The primary structure comprises 607 residues: Aspartate--tRNA(Asp/Asn) ligase (607 aa).

Glu-176 serves as a coordination point for L-aspartate. Residues 200-203 (QQFK) form an aspartate region. 2 residues coordinate L-aspartate: Arg-222 and His-456. 222-224 (RDE) serves as a coordination point for ATP. Glu-496 provides a ligand contact to ATP. Arg-503 contributes to the L-aspartate binding site. 548 to 551 (GIDR) serves as a coordination point for ATP.

It belongs to the class-II aminoacyl-tRNA synthetase family. Type 1 subfamily. As to quaternary structure, homodimer.

The protein resides in the cytoplasm. The catalysed reaction is tRNA(Asx) + L-aspartate + ATP = L-aspartyl-tRNA(Asx) + AMP + diphosphate. Functionally, aspartyl-tRNA synthetase with relaxed tRNA specificity since it is able to aspartylate not only its cognate tRNA(Asp) but also tRNA(Asn). Reaction proceeds in two steps: L-aspartate is first activated by ATP to form Asp-AMP and then transferred to the acceptor end of tRNA(Asp/Asn). The protein is Aspartate--tRNA(Asp/Asn) ligase of Parvibaculum lavamentivorans (strain DS-1 / DSM 13023 / NCIMB 13966).